Reading from the N-terminus, the 370-residue chain is D-aspartate oxidase (370 aa).

The signal sequence occupies residues M1–A18. The FAD site is built by I13, E42, A63, S64, and G68. N207 carries N-linked (GlcNAc...) asparagine glycosylation. FAD is bound by residues R308, G338, and Y339.

The protein belongs to the DAMOX/DASOX family. In terms of assembly, monomer. Requires FAD as cofactor.

It carries out the reaction D-aspartate + O2 + H2O = oxaloacetate + H2O2 + NH4(+). The enzyme catalyses D-glutamate + O2 + H2O = H2O2 + 2-oxoglutarate + NH4(+). Functionally, selectively catalyzes the oxidative deamination of acidic amino acids. Protects the organism from the toxicity of D-amino acids. Enables the organism to utilize D-amino acids as a source of nutrients. This chain is D-aspartate oxidase, found in Talaromyces thermophilus.